The following is a 258-amino-acid chain: Electron transfer flavoprotein beta subunit lysine methyltransferase (258 aa).

Belongs to the methyltransferase superfamily. ETFBKMT family.

The protein localises to the cytoplasm. Its subcellular location is the mitochondrion matrix. The catalysed reaction is L-lysyl-[protein] + 3 S-adenosyl-L-methionine = N(6),N(6),N(6)-trimethyl-L-lysyl-[protein] + 3 S-adenosyl-L-homocysteine + 3 H(+). In terms of biological role, protein-lysine methyltransferase that selectively trimethylates the flavoprotein ETFB in mitochondria. Thereby, may negatively regulate the function of ETFB in electron transfer from Acyl-CoA dehydrogenases to the main respiratory chain. This Danio rerio (Zebrafish) protein is Electron transfer flavoprotein beta subunit lysine methyltransferase.